We begin with the raw amino-acid sequence, 656 residues long: MAIFARRIGLNQHSAYGSRQRVIVMKNFGKKALIKQQSPKRVAWTGALAASLIMLPTMFGGNPVLAQKAERESLSYGELIQKVNQEQVKRVELDETEQIAKVYLKGQKPDAPPIQVRLLEQNNELINRLKEKNVDFGEISSANSRAAVGLLINLMWILPLVALMLLFLRRSTNASSQAMNFGKSRARFQMEAKTGVKFDDVAGIEEAKEELQEVVTFLKQPERFTAVGARIPKGVLLVGPPGTGKTLLAKAIAGEAAVPFFSISGSEFVEMFVGVGASRVRDLFKKAKDNAPCLIFIDEIDAVGRQRGTGIGGGNDEREQTLNQLLTEMDGFEGNTGIIIIAATNRPDVLDSALLRPGRFDRQVIVDAPDLKGRLEILQVHSRNKKVDPSVSLEAIARRTPGFTGADLANLLNEAAILTARRRKEAITILEIDDAVDRVVAGMEGTPLVDSKSKRLIAYHEVGHGLVGTLLKDHDPVQKVTLIPRGQAQGLTWFTPNEEQGLISRSQLKARITSTLAGRAAEEIVFGKPEVTTGAGDDLQKVTSMARQMVTKFGMSELGPLSLENQSGEVFLGRDWMNKSDYSEEIAAKIDSQVREIINTCYQTSKELLQTNRVVMERLVDLLTEQETIEGDLFRKIVSESQNPVVDEQLSMVNSQ.

At 1–45 the chain is on the cytoplasmic side; it reads MAIFARRIGLNQHSAYGSRQRVIVMKNFGKKALIKQQSPKRVAWT. A helical membrane pass occupies residues 46 to 66; that stretch reads GALAASLIMLPTMFGGNPVLA. Residues 67–147 lie on the Lumenal side of the membrane; that stretch reads QKAERESLSY…EISSANSRAA (81 aa). The helical transmembrane segment at 148–168 threads the bilayer; the sequence is VGLLINLMWILPLVALMLLFL. Over 169–656 the chain is Cytoplasmic; the sequence is RRSTNASSQA…DEQLSMVNSQ (488 aa). An ATP-binding site is contributed by 239-246; sequence GPPGTGKT. His460 contacts Zn(2+). The active site involves Glu461. The Zn(2+) site is built by His464 and Asp538.

It in the central section; belongs to the AAA ATPase family. The protein in the C-terminal section; belongs to the peptidase M41 family. As to quaternary structure, homohexamer. Requires Zn(2+) as cofactor.

Its subcellular location is the cellular thylakoid membrane. Functionally, acts as a processive, ATP-dependent zinc metallopeptidase for both cytoplasmic and membrane proteins. Plays a role in the quality control of integral membrane proteins. The protein is ATP-dependent zinc metalloprotease FtsH of Nostoc sp. (strain PCC 7120 / SAG 25.82 / UTEX 2576).